A 72-amino-acid chain; its full sequence is Translation initiation factor IF-1 (72 aa).

In terms of domain architecture, S1-like spans M1–K72.

It belongs to the IF-1 family. As to quaternary structure, component of the 30S ribosomal translation pre-initiation complex which assembles on the 30S ribosome in the order IF-2 and IF-3, IF-1 and N-formylmethionyl-tRNA(fMet); mRNA recruitment can occur at any time during PIC assembly.

The protein resides in the cytoplasm. Functionally, one of the essential components for the initiation of protein synthesis. Stabilizes the binding of IF-2 and IF-3 on the 30S subunit to which N-formylmethionyl-tRNA(fMet) subsequently binds. Helps modulate mRNA selection, yielding the 30S pre-initiation complex (PIC). Upon addition of the 50S ribosomal subunit IF-1, IF-2 and IF-3 are released leaving the mature 70S translation initiation complex. In Geobacter sulfurreducens (strain ATCC 51573 / DSM 12127 / PCA), this protein is Translation initiation factor IF-1.